The following is a 394-amino-acid chain: GTPase Obg (394 aa).

One can recognise an Obg domain in the interval 5 to 163; sequence SNFVDYVKIY…RMVIMQLKML (159 aa). The tract at residues 26–45 is disordered; it reads HFRREKYIPKGGPDGGDGGR. The 167-residue stretch at 164-330 folds into the OBG-type G domain; sequence ADVGLVGFPN…LKDTLWKELS (167 aa). Residues 170 to 177, 195 to 199, 217 to 220, 284 to 287, and 311 to 313 each bind GTP; these read GFPNAGKS, FTTLE, DIPG, TKCD, and SAV. Mg(2+)-binding residues include S177 and T197.

The protein belongs to the TRAFAC class OBG-HflX-like GTPase superfamily. OBG GTPase family. In terms of assembly, monomer. Mg(2+) serves as cofactor.

It localises to the cytoplasm. Functionally, an essential GTPase which binds GTP, GDP and possibly (p)ppGpp with moderate affinity, with high nucleotide exchange rates and a fairly low GTP hydrolysis rate. Plays a role in control of the cell cycle, stress response, ribosome biogenesis and in those bacteria that undergo differentiation, in morphogenesis control. The protein is GTPase Obg of Porphyromonas gingivalis (strain ATCC 33277 / DSM 20709 / CIP 103683 / JCM 12257 / NCTC 11834 / 2561).